The sequence spans 430 residues: Adenylosuccinate synthetase (430 aa).

GTP-binding positions include Gly13–Lys19 and Gly41–Thr43. Residue Asp14 is the Proton acceptor of the active site. The Mg(2+) site is built by Asp14 and Gly41. Residues Asp14–Lys17, Asn39–His42, Thr130, Arg144, Gln225, Thr240, and Arg304 each bind IMP. His42 serves as the catalytic Proton donor. Ala300–Arg306 lines the substrate pocket. GTP-binding positions include Arg306, Lys332–Asp334, and Ser414–Gly416.

It belongs to the adenylosuccinate synthetase family. In terms of assembly, homodimer. Mg(2+) is required as a cofactor.

The protein localises to the cytoplasm. It carries out the reaction IMP + L-aspartate + GTP = N(6)-(1,2-dicarboxyethyl)-AMP + GDP + phosphate + 2 H(+). Its pathway is purine metabolism; AMP biosynthesis via de novo pathway; AMP from IMP: step 1/2. Plays an important role in the de novo pathway of purine nucleotide biosynthesis. Catalyzes the first committed step in the biosynthesis of AMP from IMP. This chain is Adenylosuccinate synthetase, found in Xylella fastidiosa (strain M12).